A 303-amino-acid chain; its full sequence is MAATRYEPVAEIGVGAYGTVYKARDPHSGHFVALKSVRVPNGGAAGGGLPVSTVREVALLRRLEAFEHPNVVRLMDVCATSRTDRDIKVTLVFEHIDQDLRTYLDKAPPPGLPVETIKDLMRQFLSGLDFLHANCIVHRDLKPENILVTSNGTVKLADFGLARIYSYQMALTPVVVTLWYRAPEVLLQSTYATPVDMWSVGCIFAEMFRRKPLFCGNSEADQLGKIFDLIGLPPEDDWPREVSLPRGAFAPRGPRPVQSVVPEMEESGAQLLLEMLTFNPHKRISAFRALQHSYLHKEESDAE.

Position 2 is an N-acetylalanine (Ala2). In terms of domain architecture, Protein kinase spans 6–295; the sequence is YEPVAEIGVG…AFRALQHSYL (290 aa). ATP contacts are provided by residues 12–20 and Lys35; that span reads IGVGAYGTV. A required for binding D-type cyclins region spans residues 50-56; the sequence is PVSTVRE. Asp140 acts as the Proton acceptor in catalysis. Thr172 bears the Phosphothreonine; by CAK mark. Ser300 is subject to Phosphoserine.

It belongs to the protein kinase superfamily. CMGC Ser/Thr protein kinase family. CDC2/CDKX subfamily. As to quaternary structure, component of the D-CDK4 complex, composed of CDK4 and some D-type G1 cyclin (CCND1, CCND2 or CCND3). Interacts directly in the complex with CCND1, CCND2 or CCND3. Interacts with ZNF655. Forms a ternary complex, cyclin D-CDK4-CDKN1B, involved in modulating CDK4 enzymatic activity. Interacts directly with CDKN1B (phosphorylated on 'Tyr-88' and 'Tyr-89'); the interaction allows assembly of the cyclin D-CDK4 complex, Thr-172 phosphorylation, nuclear translocation and enhances the cyclin D-CDK4 complex activity. CDK4 activity is either inhibited or enhanced depending on stoichiometry of complex. The non-tyrosine-phosphorylated form of CDKN1B prevents T-loop phosphorylation of CDK4 producing inactive CDK4. Interacts (unphosphorylated form) with CDK2. Also forms ternary complexes with CDKN1A or CDKN2A. Interacts directly with CDKN1A (via its N-terminal); the interaction promotes the assembly of the cyclin D-CDK4 complex, its nuclear translocation and promotes the cyclin D-dependent enzyme activity of CDK4. Interacts with CCND1; the interaction is prevented with the binding of CCND1 to INSM1 during cell cycle progression. Interacts with SEI1 and CCND1. Probably forms a complex composed of chaperones HSP90 and HSP70, co-chaperones CDC37, PPP5C, TSC1 and client protein TSC2, CDK4, AKT, RAF1 and NR3C1; this complex does not contain co-chaperones STIP1/HOP and PTGES3/p23. Interacts with CEBPA (when phosphorylated). Interacts with FNIP1 and FNIP2. Phosphorylation at Thr-172 is required for enzymatic activity. Phosphorylated, in vitro, at this site by CCNH-CDK7, but, in vivo, appears to be phosphorylated by a proline-directed kinase. In the cyclin D-CDK4-CDKN1B complex, this phosphorylation and consequent CDK4 enzyme activity, is dependent on the tyrosine phosphorylation state of CDKN1B. Thus, in proliferating cells, CDK4 within the complex is phosphorylated on Thr-172 in the T-loop. In resting cells, phosphorylation on Thr-172 is prevented by the non-tyrosine-phosphorylated form of CDKN1B.

It localises to the cytoplasm. The protein localises to the nucleus. It is found in the nucleus membrane. It carries out the reaction L-seryl-[protein] + ATP = O-phospho-L-seryl-[protein] + ADP + H(+). It catalyses the reaction L-threonyl-[protein] + ATP = O-phospho-L-threonyl-[protein] + ADP + H(+). Its activity is regulated as follows. Both phosphorylation at Thr-172 and binding of a D-type cyclin are necessary for enzymatic activity. Full activation of the cyclin-D-CDK4 complex appears to require other factors such as recruitment of the substrate via a substrate recruitment motif, and/or formation of the CDKN1B ternary complex. Inhibited by INK4 family members. In resting cells, the non-tyrosine-phosphorylated form of CDKN1B prevents phosphorylation at Thr-172 and inactivation, while, in proliferating cells, tyrosine phosphorylation of CDKN1B allows phosphorylation of Thr-172 of CDK4 and subsequent activation. In terms of biological role, ser/Thr-kinase component of cyclin D-CDK4 (DC) complexes that phosphorylate and inhibit members of the retinoblastoma (RB) protein family including RB1 and regulate the cell-cycle during G(1)/S transition. Phosphorylation of RB1 allows dissociation of the transcription factor E2F from the RB/E2F complexes and the subsequent transcription of E2F target genes which are responsible for the progression through the G(1) phase. Hypophosphorylates RB1 in early G(1) phase. Cyclin D-CDK4 complexes are major integrators of various mitogenenic and antimitogenic signals. Also phosphorylates SMAD3 in a cell-cycle-dependent manner and represses its transcriptional activity. Component of the ternary complex, cyclin D/CDK4/CDKN1B, required for nuclear translocation and activity of the cyclin D-CDK4 complex. The chain is Cyclin-dependent kinase 4 (Cdk4) from Mus musculus (Mouse).